Consider the following 429-residue polypeptide: Endoglucanase type C (429 aa).

The signal sequence occupies residues 1 to 18 (MKSLSLILSALAVQVAVA). Residue glutamine 19 is modified to Pyrrolidone carboxylic acid. 9 disulfide bridges follow: cysteine 36/cysteine 42, cysteine 66/cysteine 88, cysteine 78/cysteine 84, cysteine 156/cysteine 383, cysteine 190/cysteine 213, cysteine 194/cysteine 212, cysteine 233/cysteine 252, cysteine 241/cysteine 246, and cysteine 257/cysteine 333. Residue asparagine 74 is glycosylated (N-linked (GlcNAc...) asparagine). Residue glutamate 215 is the Nucleophile of the active site. Glutamate 220 (proton donor) is an active-site residue. 2 N-linked (GlcNAc...) asparagine glycosylation sites follow: asparagine 265 and asparagine 318.

This sequence belongs to the glycosyl hydrolase 7 (cellulase C) family.

The enzyme catalyses Endohydrolysis of (1-&gt;4)-beta-D-glucosidic linkages in cellulose, lichenin and cereal beta-D-glucans.. In Fusarium oxysporum (Fusarium vascular wilt), this protein is Endoglucanase type C.